Consider the following 247-residue polypeptide: MQTQVLFEHPLNEKMRTWLRIEFLIQQLTVNLPIADHAGALHFFRNVSELLDVFERGEVRTELLKELDRQQRKLQTWIGVPGVDQSRIEALIQQLKAAGSVLISAPRIGQFLREDRLIALVRQRLSIPGGCCSFDLPSLHIWLHLPQAQRDSQVETWIASLNPLTQALTMVLDLIRQSAPFRKQTSLNGFYQDNGGDADLLRLNLSLDSQLYPQISGHKSRFAIRFMPLDSENGQVPERLDFELACC.

This sequence belongs to the ZapD family. As to quaternary structure, interacts with FtsZ.

The protein resides in the cytoplasm. Its function is as follows. Cell division factor that enhances FtsZ-ring assembly. Directly interacts with FtsZ and promotes bundling of FtsZ protofilaments, with a reduction in FtsZ GTPase activity. This is Cell division protein ZapD from Escherichia coli O17:K52:H18 (strain UMN026 / ExPEC).